The primary structure comprises 244 residues: Phosphoadenosine 5'-phosphosulfate reductase (244 aa).

Cys-239 (nucleophile; cysteine thiosulfonate intermediate) is an active-site residue.

This sequence belongs to the PAPS reductase family. CysH subfamily.

It localises to the cytoplasm. It catalyses the reaction [thioredoxin]-disulfide + sulfite + adenosine 3',5'-bisphosphate + 2 H(+) = [thioredoxin]-dithiol + 3'-phosphoadenylyl sulfate. Its pathway is sulfur metabolism; hydrogen sulfide biosynthesis; sulfite from sulfate: step 3/3. Its function is as follows. Catalyzes the formation of sulfite from phosphoadenosine 5'-phosphosulfate (PAPS) using thioredoxin as an electron donor. This chain is Phosphoadenosine 5'-phosphosulfate reductase, found in Klebsiella pneumoniae subsp. pneumoniae (strain ATCC 700721 / MGH 78578).